The chain runs to 337 residues: Holliday junction branch migration complex subunit RuvB (337 aa).

The large ATPase domain (RuvB-L) stretch occupies residues 1–179 (MTHQVSVLHQ…FSFSGRVSYY (179 aa)). ATP contacts are provided by residues L18, R19, G60, K63, T64, S65, 126-128 (EDY), R169, Y179, and R216. Residue T64 coordinates Mg(2+). Positions 180 to 250 (SDEDLATILK…VAEKALSMLL (71 aa)) are small ATPAse domain (RuvB-S). Residues 253–337 (DWGLNEIDIK…DNLQILGEEK (85 aa)) are head domain (RuvB-H). Positions 308 and 313 each coordinate DNA.

The protein belongs to the RuvB family. As to quaternary structure, homohexamer. Forms an RuvA(8)-RuvB(12)-Holliday junction (HJ) complex. HJ DNA is sandwiched between 2 RuvA tetramers; dsDNA enters through RuvA and exits via RuvB. An RuvB hexamer assembles on each DNA strand where it exits the tetramer. Each RuvB hexamer is contacted by two RuvA subunits (via domain III) on 2 adjacent RuvB subunits; this complex drives branch migration. In the full resolvosome a probable DNA-RuvA(4)-RuvB(12)-RuvC(2) complex forms which resolves the HJ.

It is found in the cytoplasm. The catalysed reaction is ATP + H2O = ADP + phosphate + H(+). Its function is as follows. The RuvA-RuvB-RuvC complex processes Holliday junction (HJ) DNA during genetic recombination and DNA repair, while the RuvA-RuvB complex plays an important role in the rescue of blocked DNA replication forks via replication fork reversal (RFR). RuvA specifically binds to HJ cruciform DNA, conferring on it an open structure. The RuvB hexamer acts as an ATP-dependent pump, pulling dsDNA into and through the RuvAB complex. RuvB forms 2 homohexamers on either side of HJ DNA bound by 1 or 2 RuvA tetramers; 4 subunits per hexamer contact DNA at a time. Coordinated motions by a converter formed by DNA-disengaged RuvB subunits stimulates ATP hydrolysis and nucleotide exchange. Immobilization of the converter enables RuvB to convert the ATP-contained energy into a lever motion, pulling 2 nucleotides of DNA out of the RuvA tetramer per ATP hydrolyzed, thus driving DNA branch migration. The RuvB motors rotate together with the DNA substrate, which together with the progressing nucleotide cycle form the mechanistic basis for DNA recombination by continuous HJ branch migration. Branch migration allows RuvC to scan DNA until it finds its consensus sequence, where it cleaves and resolves cruciform DNA. The chain is Holliday junction branch migration complex subunit RuvB from Chlamydia felis (strain Fe/C-56) (Chlamydophila felis).